We begin with the raw amino-acid sequence, 298 residues long: Aclacinomycin methylesterase RdmC (298 aa).

The AB hydrolase-1 domain maps to 24–277; sequence PALLLVMGGN…LAEIPGMGHA (254 aa). Residues Ser-102, Asp-248, and His-276 contribute to the active site.

It belongs to the AB hydrolase superfamily. Hydrolase RdmC family. In terms of assembly, monomer.

It catalyses the reaction aclacinomycin T + H2O = 15-demethylaclacinomycin T + methanol. Its pathway is antibiotic biosynthesis; aclacinomycin biosynthesis. Functionally, involved in the biosynthesis of the anthracycline aclacinomycin which is an aromatic polyketide antibiotic that exhibits high cytotoxicity and is widely applied in the chemotherapy of a variety of cancers. Catalyzes the removal of the methoxy group from the C-15 position of aclacinomycin T and A to yield 15-demethoxyaclacinomycin T and A, respectively. The polypeptide is Aclacinomycin methylesterase RdmC (rdmC) (Streptomyces purpurascens).